The following is a 203-amino-acid chain: Large ribosomal subunit protein uL13 (203 aa).

A2 carries the post-translational modification N-acetylalanine. A Citrulline modification is found at R59. S77 carries the phosphoserine; by ZIPK/DAPK3 modification. R140 is modified (citrulline). K191 is modified (N6-acetyllysine).

This sequence belongs to the universal ribosomal protein uL13 family. Component of the 60S ribosome. Component of the GAIT complex. Interacts with EIF4G1. Phosphorylation at Ser-77 upon interferon-gamma treatment in macrophages involves a DAPK1-DAPK3 kinase cascade and is causing release from the ribosome, association with the GAIT complex and subsequent involvement in transcript-selective translation inhibition. Post-translationally, citrullinated by PADI4.

Its subcellular location is the cytoplasm. Its function is as follows. Associated with ribosomes but is not required for canonical ribosome function and has extra-ribosomal functions. Component of the GAIT (gamma interferon-activated inhibitor of translation) complex which mediates interferon-gamma-induced transcript-selective translation inhibition in inflammation processes. Upon interferon-gamma activation and subsequent phosphorylation dissociates from the ribosome and assembles into the GAIT complex which binds to stem loop-containing GAIT elements in the 3'-UTR of diverse inflammatory mRNAs (such as ceruplasmin) and suppresses their translation. In the GAIT complex interacts with m7G cap-bound eIF4G at or near the eIF3-binding site and blocks the recruitment of the 43S ribosomal complex. Involved in methylation of rRNA. This chain is Large ribosomal subunit protein uL13 (Rpl13a), found in Mus musculus (Mouse).